Consider the following 382-residue polypeptide: Pyrimidine monooxygenase RutA (382 aa).

FMN is bound by residues 68–69, asparagine 134, glutamate 143, 159–160, and serine 209; these read IK and RY.

This sequence belongs to the NtaA/SnaA/DszA monooxygenase family. RutA subfamily.

The catalysed reaction is uracil + FMNH2 + NADH + O2 = (Z)-3-ureidoacrylate + FMN + NAD(+) + H2O + H(+). It carries out the reaction thymine + FMNH2 + NADH + O2 = (Z)-2-methylureidoacrylate + FMN + NAD(+) + H2O + H(+). In terms of biological role, catalyzes the pyrimidine ring opening between N-3 and C-4 by an unusual flavin hydroperoxide-catalyzed mechanism, adding oxygen atoms in the process to yield ureidoacrylate peracid, that immediately reacts with FMN forming ureidoacrylate and FMN-N(5)-oxide. The FMN-N(5)-oxide reacts spontaneously with NADH to produce FMN. Requires the flavin reductase RutF to regenerate FMN in vivo. The chain is Pyrimidine monooxygenase RutA from Escherichia coli O81 (strain ED1a).